A 103-amino-acid polypeptide reads, in one-letter code: Small ribosomal subunit protein uS10 (103 aa).

Belongs to the universal ribosomal protein uS10 family. In terms of assembly, part of the 30S ribosomal subunit.

Involved in the binding of tRNA to the ribosomes. The sequence is that of Small ribosomal subunit protein uS10 from Bordetella avium (strain 197N).